Reading from the N-terminus, the 342-residue chain is Ketoreductase nvfG (342 aa).

The protein belongs to the NAD(P)-dependent epimerase/dehydratase family. Dihydroflavonol-4-reductase subfamily.

It functions in the pathway secondary metabolite biosynthesis; terpenoid biosynthesis. Its function is as follows. Ketoreductase; part of the gene cluster that mediates the biosynthesis of novofumigatonin, a heavily oxygenated meroterpenoid containing a unique orthoester moiety. The first step of the pathway is the synthesis of 3,5-dimethylorsellinic acid (DMOA) by the polyketide synthase nvfA via condensation of one acetyl-CoA starter unit with 3 malonyl-CoA units and 2 methylations. DMOA is then converted to farnesyl-DMOA by the farnesyltransferase nvfB. Epoxydation by FAD-dependent monooxygenase nvfK, followed by a protonation-initiated cyclization catalyzed by the terpene cyclase nvfL leads to the production of asnavolin H. The short chain dehydrogenase nvfC then as a 3-OH dehydrogenase of asnovolin H to yield chemesin D. There are two branches to synthesize asnovolin A from chemesin D. In one branch, chemesin D undergoes Baeyer-Villiger oxidation by nvfH, methylation by nvfJ, and enoyl reduction by the nvfM D enoylreductase that reduces the double bond between C-5'and C-6', to form respectively asnovolin I, asnovolin K, and asnovolin A. In the other branch, the methylation precedes the Baeyer-Villiger oxidation and the enoyl reduction to yield asnovolin A via the asnovolin J intermediate. Asnovolin A is further converted to fumigatonoid A by the Fe(II)/2-oxoglutarate-dependent dioxygenase nvfI that catalyzes an endoperoxidation reaction. The alpha/beta hydrolase nvfD then acts as an epimerase that converts fumigatonoid A to its C-5' epimer, which then undergoes spontaneous or nvfD-catalyzed lactonization. The following step utilizes the ketoreductase nvfG to produce fumigatonoid B. The dioxygenase nvfE further converts fumigatonoid B into fumigatonoid C. Finally the Fe(II)/2-oxoglutarate-dependent dioxygenase nvfF catalyzes two rounds of oxidation to transform fumigatonoid C into the end product, novofumigatonin A. This Aspergillus novofumigatus (strain IBT 16806) protein is Ketoreductase nvfG.